A 184-amino-acid chain; its full sequence is Small ribosomal subunit protein uS7 (184 aa).

This sequence belongs to the universal ribosomal protein uS7 family. Part of the 30S ribosomal subunit.

In terms of biological role, one of the primary rRNA binding proteins, it binds directly to 16S rRNA where it nucleates assembly of the head domain of the 30S subunit. Is located at the subunit interface close to the decoding center. In Thermoplasma volcanium (strain ATCC 51530 / DSM 4299 / JCM 9571 / NBRC 15438 / GSS1), this protein is Small ribosomal subunit protein uS7.